The primary structure comprises 859 residues: DNA mismatch repair protein MutS (859 aa).

Residue 617–624 (GPNMGGKS) coordinates ATP.

This sequence belongs to the DNA mismatch repair MutS family.

This protein is involved in the repair of mismatches in DNA. It is possible that it carries out the mismatch recognition step. This protein has a weak ATPase activity. The sequence is that of DNA mismatch repair protein MutS from Stutzerimonas stutzeri (strain A1501) (Pseudomonas stutzeri).